Reading from the N-terminus, the 493-residue chain is Uridine 5'-monophosphate synthase (493 aa).

The interval 1 to 207 (MVAQNSDKMR…VAKYIAAVQI (207 aa)) is OPRTase. The segment at 208–233 (NSDGTFVGGDKGDVVRANDLQRTKLT) is domain linker. The segment at 234–493 (YENRANLAKS…WAAYQDRVAK (260 aa)) is OMPdecase. Lys-320 is a catalytic residue.

It in the N-terminal section; belongs to the purine/pyrimidine phosphoribosyltransferase family. In the C-terminal section; belongs to the OMP decarboxylase family.

The catalysed reaction is orotidine 5'-phosphate + diphosphate = orotate + 5-phospho-alpha-D-ribose 1-diphosphate. The enzyme catalyses orotidine 5'-phosphate + H(+) = UMP + CO2. Its pathway is pyrimidine metabolism; UMP biosynthesis via de novo pathway; UMP from orotate: step 1/2. It functions in the pathway pyrimidine metabolism; UMP biosynthesis via de novo pathway; UMP from orotate: step 2/2. The sequence is that of Uridine 5'-monophosphate synthase (r-l) from Drosophila melanogaster (Fruit fly).